The primary structure comprises 863 residues: Oleate activated transcription factor 3 (863 aa).

The segment at residues 19 to 47 (CTNCKKRKSKCDRTKPCGTCVRLGDVDSC) is a DNA-binding region (zn(2)-C6 fungal-type). Residues 52 to 63 (DSSGQPESSPSL) show a composition bias toward polar residues. Positions 52–81 (DSSGQPESSPSLNDADPLRKQSTPAERISP) are disordered.

This sequence belongs to the OAF3 family.

The protein resides in the cytoplasm. Its subcellular location is the nucleus. It localises to the mitochondrion. Its function is as follows. Transcriptional inhibitor with a significantly increased number of target genes in response to oleate. This Saccharomyces cerevisiae (strain RM11-1a) (Baker's yeast) protein is Oleate activated transcription factor 3 (OAF3).